Here is a 177-residue protein sequence, read N- to C-terminus: Flavodoxin (177 aa).

The 170-residue stretch at 4-173 folds into the Flavodoxin-like domain; it reads IGIFFGSDTG…RIDSWLEKLK (170 aa).

This sequence belongs to the flavodoxin family. FMN serves as cofactor.

In terms of biological role, low-potential electron donor to a number of redox enzymes. NifF is the electron donor to nitrogenase. The protein is Flavodoxin (nifF) of Enterobacter agglomerans (Erwinia herbicola).